We begin with the raw amino-acid sequence, 582 residues long: Semenogelin-2 (582 aa).

The signal sequence occupies residues 1-23 (MKSIILFVLSLLLILEKQAAVMG). Disordered stretches follow at residues 25–65 (KGGS…SSSI), 91–157 (HKTT…GISS), 171–192 (LSKE…GSQS), 272–366 (NLNQ…KDIQ), and 393–557 (SNQD…HNTV). Residues 50 to 59 (GQKDKQHTES) show a composition bias toward basic and acidic residues. A compositionally biased stretch (basic residues) spans 111 to 134 (QKGRDHVKPKRHFRLIVIHRKGGQ). 2 stretches are compositionally biased toward polar residues: residues 137–157 (HGTQ…GISS) and 174–192 (EQAS…GSQS). Positions 293-310 (TEERQFNHGEKSVQKDVP) are enriched in basic and acidic residues. Over residues 325–335 (KSQNQVSIPSQ) the composition is skewed to polar residues. Composition is skewed to basic and acidic residues over residues 336–345 (DQEHGHKENK), 353–366 (TEER…KDIQ), 396–405 (DQEHGHKENK), and 413–426 (TEER…KDIQ). Polar residues-rich tracts occupy residues 427 to 437 (KSVSKGSISIQ) and 445 to 455 (KSQNQVTIPSQ). Residues 456–465 (DQEHGHKENK) show a composition bias toward basic and acidic residues. Polar residues-rich tracts occupy residues 487–498 (KDVSQSSLSFQT) and 506–529 (SQIQ…NSGK). Residues 530–546 (SADREQDLLSHEQESRY) are compositionally biased toward basic and acidic residues. Polar residues predominate over residues 547 to 557 (QQKSSGAHNTV).

Belongs to the semenogelin family. In terms of assembly, interacts with SERPINA5.

It is found in the secreted. Participates in the formation of a gel matrix (sperm coagulum) entrapping the accessory gland secretions and ejaculated spermatozoa. The polypeptide is Semenogelin-2 (SEMG2) (Colobus guereza (Mantled guereza)).